The sequence spans 459 residues: Ribulose bisphosphate carboxylase large chain (459 aa).

Positions 1 to 2 (MS) are excised as a propeptide. Proline 3 carries the N-acetylproline modification. Position 14 is an N6,N6,N6-trimethyllysine (lysine 14). Substrate is bound by residues residue 123 and threonine 173. Lysine 175 serves as the catalytic Proton acceptor. Substrate is bound at residue lysine 177. Residues lysine 201, aspartate 203, and glutamate 204 each coordinate Mg(2+). At lysine 201 the chain carries N6-carboxylysine. The active-site Proton acceptor is histidine 294. Substrate is bound by residues arginine 295, histidine 327, and serine 379.

The protein belongs to the RuBisCO large chain family. Type I subfamily. Heterohexadecamer of 8 large chains and 8 small chains; disulfide-linked. The disulfide link is formed within the large subunit homodimers. It depends on Mg(2+) as a cofactor. In terms of processing, the disulfide bond which can form in the large chain dimeric partners within the hexadecamer appears to be associated with oxidative stress and protein turnover.

Its subcellular location is the plastid. It localises to the chloroplast. It catalyses the reaction 2 (2R)-3-phosphoglycerate + 2 H(+) = D-ribulose 1,5-bisphosphate + CO2 + H2O. The enzyme catalyses D-ribulose 1,5-bisphosphate + O2 = 2-phosphoglycolate + (2R)-3-phosphoglycerate + 2 H(+). In terms of biological role, ruBisCO catalyzes two reactions: the carboxylation of D-ribulose 1,5-bisphosphate, the primary event in carbon dioxide fixation, as well as the oxidative fragmentation of the pentose substrate in the photorespiration process. Both reactions occur simultaneously and in competition at the same active site. This Corynocarpus laevigatus (New Zealand laurel) protein is Ribulose bisphosphate carboxylase large chain.